The primary structure comprises 228 residues: Glutamate transport system permease protein GluC (228 aa).

Helical transmembrane passes span 16-36 (FWVT…LGTI), 64-84 (LTLV…LTLA), 100-120 (AVLG…RSGI), and 195-215 (LFVV…PMGL). The 202-residue stretch at 16–217 (FWVTIQLTVY…ILTLPMGLGL (202 aa)) folds into the ABC transmembrane type-1 domain.

Belongs to the binding-protein-dependent transport system permease family. HisMQ subfamily. As to quaternary structure, the complex is composed of two ATP-binding proteins (GluA), two transmembrane proteins (GluC and GluD) and a solute-binding protein (GluB).

It localises to the cell membrane. In terms of biological role, part of the ABC transporter complex GluABCD involved in glutamate uptake. Probably responsible for the translocation of the substrate across the membrane. This Corynebacterium efficiens (strain DSM 44549 / YS-314 / AJ 12310 / JCM 11189 / NBRC 100395) protein is Glutamate transport system permease protein GluC.